Here is a 432-residue protein sequence, read N- to C-terminus: Mannose-6-phosphate isomerase 1 (432 aa).

N-acetylmethionine is present on M1. Zn(2+)-binding residues include Q124, H126, E151, and H288. The active site involves R307.

The protein belongs to the mannose-6-phosphate isomerase type 1 family. Zn(2+) is required as a cofactor. In terms of tissue distribution, constitutively expressed in both vegetative and reproductive organs under normal growth conditions (at protein level).

The catalysed reaction is D-mannose 6-phosphate = D-fructose 6-phosphate. Its pathway is nucleotide-sugar biosynthesis; GDP-alpha-D-mannose biosynthesis; alpha-D-mannose 1-phosphate from D-fructose 6-phosphate: step 1/2. With respect to regulation, inhibited by EDTA, Zn(2+), Cd(2+), Co(2+), p-chloromercuribenzoate and L-ascorbic acid (AsA). Functionally, phosphomannose isomerase involved in the synthesis of the GDP-mannose and dolichol-phosphate-mannose required for a number of critical mannosyl transfer reactions. Involved in the ascorbic acid (AsA) biosynthesis. Required during the endosperm development. The protein is Mannose-6-phosphate isomerase 1 (PMI1) of Arabidopsis thaliana (Mouse-ear cress).